Here is a 70-residue protein sequence, read N- to C-terminus: uncharacterized protein (70 aa).

The C2H2-type zinc-finger motif lies at tyrosine 21–histidine 43.

This is an uncharacterized protein from Saccharolobus islandicus (Sulfolobus islandicus).